A 511-amino-acid chain; its full sequence is Sodium/proline symporter (511 aa).

Helical transmembrane passes span 16 to 36 (WQTYVMIIVYFIILLIIGFYG), 54 to 74 (IGPYITALSAGASDMSGWMIM), 85 to 105 (LSAIWITIGLTLGAYINYFVV), 139 to 159 (IISGLIIVVFFTLYTHSGFVS), 175 to 195 (GLLIVAIIVIFYTFFGGYLAV), 199 to 219 (DFFQGVIMLIAMVMVPIVALL), 246 to 266 (VLGIVSLFSWGLGYFGQPHII), 284 to 304 (LGISWMAVGLLGAIGVGLTGI), 327 to 347 (ILFHPLVGGFLLAAILAAIMS), 381 to 401 (FVLIGRLSVLLVAIVAITIAW), 407 to 427 (ILNLVGNAWAGFGAAFSPLVL), 438 to 458 (AGAISGMVAGAVVVIVWISWI), and 467 to 487 (FFGMYEIIPGFIVSVLITYIV).

This sequence belongs to the sodium:solute symporter (SSF) (TC 2.A.21) family.

Its subcellular location is the cell membrane. The enzyme catalyses L-proline(in) + Na(+)(in) = L-proline(out) + Na(+)(out). In terms of biological role, catalyzes the sodium-dependent uptake of extracellular L-proline. The sequence is that of Sodium/proline symporter (putP) from Staphylococcus epidermidis (strain ATCC 35984 / DSM 28319 / BCRC 17069 / CCUG 31568 / BM 3577 / RP62A).